The sequence spans 505 residues: Maturase K (505 aa).

This sequence belongs to the intron maturase 2 family. MatK subfamily.

Its subcellular location is the plastid. The protein localises to the chloroplast. Usually encoded in the trnK tRNA gene intron. Probably assists in splicing its own and other chloroplast group II introns. The sequence is that of Maturase K from Allamanda cathartica (Yellow allamanda).